The following is a 316-amino-acid chain: 4-diphosphocytidyl-2-C-methyl-D-erythritol kinase (316 aa).

K32 is an active-site residue. An ATP-binding site is contributed by 126-136 (PVGAGLGGGSA). D168 is a catalytic residue.

This sequence belongs to the GHMP kinase family. IspE subfamily.

It carries out the reaction 4-CDP-2-C-methyl-D-erythritol + ATP = 4-CDP-2-C-methyl-D-erythritol 2-phosphate + ADP + H(+). It participates in isoprenoid biosynthesis; isopentenyl diphosphate biosynthesis via DXP pathway; isopentenyl diphosphate from 1-deoxy-D-xylulose 5-phosphate: step 3/6. Catalyzes the phosphorylation of the position 2 hydroxy group of 4-diphosphocytidyl-2C-methyl-D-erythritol. The polypeptide is 4-diphosphocytidyl-2-C-methyl-D-erythritol kinase (Bifidobacterium longum (strain NCC 2705)).